A 236-amino-acid chain; its full sequence is Leucyl/phenylalanyl-tRNA--protein transferase (236 aa).

It belongs to the L/F-transferase family.

The protein localises to the cytoplasm. It carries out the reaction N-terminal L-lysyl-[protein] + L-leucyl-tRNA(Leu) = N-terminal L-leucyl-L-lysyl-[protein] + tRNA(Leu) + H(+). The enzyme catalyses N-terminal L-arginyl-[protein] + L-leucyl-tRNA(Leu) = N-terminal L-leucyl-L-arginyl-[protein] + tRNA(Leu) + H(+). It catalyses the reaction L-phenylalanyl-tRNA(Phe) + an N-terminal L-alpha-aminoacyl-[protein] = an N-terminal L-phenylalanyl-L-alpha-aminoacyl-[protein] + tRNA(Phe). Functionally, functions in the N-end rule pathway of protein degradation where it conjugates Leu, Phe and, less efficiently, Met from aminoacyl-tRNAs to the N-termini of proteins containing an N-terminal arginine or lysine. The sequence is that of Leucyl/phenylalanyl-tRNA--protein transferase from Shewanella halifaxensis (strain HAW-EB4).